We begin with the raw amino-acid sequence, 126 residues long: Aspartate 1-decarboxylase (126 aa).

Residue serine 25 is the Schiff-base intermediate with substrate; via pyruvic acid of the active site. At serine 25 the chain carries Pyruvic acid (Ser). Residue threonine 57 coordinates substrate. The active-site Proton donor is tyrosine 58. Residue 73 to 75 participates in substrate binding; sequence GAA.

The protein belongs to the PanD family. As to quaternary structure, heterooctamer of four alpha and four beta subunits. The cofactor is pyruvate. Is synthesized initially as an inactive proenzyme, which is activated by self-cleavage at a specific serine bond to produce a beta-subunit with a hydroxyl group at its C-terminus and an alpha-subunit with a pyruvoyl group at its N-terminus.

The protein localises to the cytoplasm. The enzyme catalyses L-aspartate + H(+) = beta-alanine + CO2. It functions in the pathway cofactor biosynthesis; (R)-pantothenate biosynthesis; beta-alanine from L-aspartate: step 1/1. In terms of biological role, catalyzes the pyruvoyl-dependent decarboxylation of aspartate to produce beta-alanine. In Salmonella arizonae (strain ATCC BAA-731 / CDC346-86 / RSK2980), this protein is Aspartate 1-decarboxylase.